A 201-amino-acid polypeptide reads, in one-letter code: Probable GTP-binding protein EngB (201 aa).

Residues 21–191 (PEAQIALAGR…WQELARAAGV (171 aa)) form the EngB-type G domain. GTP-binding positions include 29–36 (GRSNVGKS), 56–60 (GKTRS), 75–78 (DLPG), 142–145 (TKAD), and 168–172 (VLTSS). S36 and T58 together coordinate Mg(2+).

Belongs to the TRAFAC class TrmE-Era-EngA-EngB-Septin-like GTPase superfamily. EngB GTPase family. Requires Mg(2+) as cofactor.

Functionally, necessary for normal cell division and for the maintenance of normal septation. The sequence is that of Probable GTP-binding protein EngB from Desulfovibrio desulfuricans (strain ATCC 27774 / DSM 6949 / MB).